The chain runs to 239 residues: Serine protease SplF (239 aa).

The signal sequence occupies residues 1-36 (MNKNIIIKSIGALTILTSITGVGTTMVEGIQQTAKA). Active-site charge relay system residues include His75, Asp114, and Ser192.

The protein belongs to the peptidase S1B family.

It is found in the secreted. The chain is Serine protease SplF (splF) from Staphylococcus aureus (strain USA300).